A 261-amino-acid chain; its full sequence is Cytochrome c oxidase subunit 3 (261 aa).

Topologically, residues 1–15 are mitochondrial matrix; it reads MTHQTHAYHMVNPSP. The helical transmembrane segment at 16–34 threads the bilayer; it reads WPLTGALSALLMSSGLTMW. Topologically, residues 35 to 40 are mitochondrial intermembrane; it reads FHFNSL. A helical membrane pass occupies residues 41 to 66; that stretch reads ILLTTGLVTNILTMYQWWRDVIREST. Residues 67–72 lie on the Mitochondrial matrix side of the membrane; that stretch reads FQGHHT. The helical transmembrane segment at 73–105 threads the bilayer; it reads PVVQKGLRYGMVLFIISEVLFFTGFFWAFYHSS. Residues 106-128 are Mitochondrial intermembrane-facing; that stretch reads LAPTPELGGCWPPTGINPLNPLE. The helical transmembrane segment at 129-152 threads the bilayer; sequence VPLLNTSVLLASGVSITWAHHSLM. The Mitochondrial matrix segment spans residues 153–155; sequence EGN. Residues 156 to 183 traverse the membrane as a helical segment; it reads RKQMLQALFITIALGVYFTLLQASEYHE. Residues 184-190 lie on the Mitochondrial intermembrane side of the membrane; sequence ASFTISD. The chain crosses the membrane as a helical span at residues 191 to 223; it reads GVYGSTFFVATGFHGLHVIIGSTFLIVCFLRQL. Residues 224 to 232 lie on the Mitochondrial matrix side of the membrane; the sequence is KFHFTSDHH. Residues 233-256 form a helical membrane-spanning segment; that stretch reads FGFEAAAWYWHFVDVVWLFLYVSI. The Mitochondrial intermembrane portion of the chain corresponds to 257–261; it reads YWWGS.

The protein belongs to the cytochrome c oxidase subunit 3 family. In terms of assembly, component of the cytochrome c oxidase (complex IV, CIV), a multisubunit enzyme composed of 14 subunits. The complex is composed of a catalytic core of 3 subunits MT-CO1, MT-CO2 and MT-CO3, encoded in the mitochondrial DNA, and 11 supernumerary subunits COX4I, COX5A, COX5B, COX6A, COX6B, COX6C, COX7A, COX7B, COX7C, COX8 and NDUFA4, which are encoded in the nuclear genome. The complex exists as a monomer or a dimer and forms supercomplexes (SCs) in the inner mitochondrial membrane with NADH-ubiquinone oxidoreductase (complex I, CI) and ubiquinol-cytochrome c oxidoreductase (cytochrome b-c1 complex, complex III, CIII), resulting in different assemblies (supercomplex SCI(1)III(2)IV(1) and megacomplex MCI(2)III(2)IV(2)).

It localises to the mitochondrion inner membrane. It carries out the reaction 4 Fe(II)-[cytochrome c] + O2 + 8 H(+)(in) = 4 Fe(III)-[cytochrome c] + 2 H2O + 4 H(+)(out). Its function is as follows. Component of the cytochrome c oxidase, the last enzyme in the mitochondrial electron transport chain which drives oxidative phosphorylation. The respiratory chain contains 3 multisubunit complexes succinate dehydrogenase (complex II, CII), ubiquinol-cytochrome c oxidoreductase (cytochrome b-c1 complex, complex III, CIII) and cytochrome c oxidase (complex IV, CIV), that cooperate to transfer electrons derived from NADH and succinate to molecular oxygen, creating an electrochemical gradient over the inner membrane that drives transmembrane transport and the ATP synthase. Cytochrome c oxidase is the component of the respiratory chain that catalyzes the reduction of oxygen to water. Electrons originating from reduced cytochrome c in the intermembrane space (IMS) are transferred via the dinuclear copper A center (CU(A)) of subunit 2 and heme A of subunit 1 to the active site in subunit 1, a binuclear center (BNC) formed by heme A3 and copper B (CU(B)). The BNC reduces molecular oxygen to 2 water molecules using 4 electrons from cytochrome c in the IMS and 4 protons from the mitochondrial matrix. This is Cytochrome c oxidase subunit 3 (MT-CO3) from Hippopotamus amphibius (Hippopotamus).